Here is a 299-residue protein sequence, read N- to C-terminus: Ficolin-3 (299 aa).

Positions 1-23 are cleaved as a signal peptide; that stretch reads MDLLWILPSLWLLLLGGPACLKT. Residues 44–81 form a disordered region; the sequence is PSCPGAPGSPGEKGAPGPQGPPGPPGKMGPKGEPGDPV. One can recognise a Collagen-like domain in the interval 48 to 80; the sequence is GAPGSPGEKGAPGPQGPPGPPGKMGPKGEPGDP. Hydroxyproline occurs at positions 50, 53, 59, 65, 68, and 77. Over residues 61–70 the composition is skewed to pro residues; that stretch reads PQGPPGPPGK. One can recognise a Fibrinogen C-terminal domain in the interval 84–299; the sequence is LRCQEGPRNC…PYRRVRMMLR (216 aa). 2 disulfides stabilise this stretch: C86–C110 and C93–C121. N189 carries an N-linked (GlcNAc...) (complex) asparagine glycan. Residues D237, D239, S241, and S243 each contribute to the Ca(2+) site. A disulfide bridge connects residues C245 and C258. 258 to 259 lines the a carbohydrate pocket; that stretch reads CY.

It belongs to the ficolin lectin family. Homotrimer. May form an octadecamer consisting of an elementary trimer unit. Does not interact with fibronectin, elastin or zymosan. Interacts with MASP1 and MASP2. Post-translationally, the N-terminus is blocked. Liver and lung. In liver it is produced by bile duct epithelial cells and hepatocytes. In lung it is produced by both ciliated bronchial epithelial cells and type II alveolar epithelial cells.

The protein localises to the secreted. May function in innate immunity through activation of the lectin complement pathway. Calcium-dependent and GlcNAc-binding lectin. Has affinity with GalNAc, GlcNAc, D-fucose, as mono/oligosaccharide and lipopolysaccharides from S.typhimurium and S.minnesota. This Homo sapiens (Human) protein is Ficolin-3 (FCN3).